Reading from the N-terminus, the 317-residue chain is Melanocyte-stimulating hormone receptor (317 aa).

The Extracellular segment spans residues 1-37 (MPVQGSQRRLLGSLNSTPTATPHLGLAANQTGARCLE). Residue Asn29 is glycosylated (N-linked (GlcNAc...) asparagine). The helical transmembrane segment at 38 to 63 (VSIPDGLFLSLGLVSLVENVLVVTAI) threads the bilayer. Topologically, residues 64-72 (AKNRNLHSP) are cytoplasmic. Residues 73-93 (MYCFICCLALSDLLVSGSNML) form a helical membrane-spanning segment. Residues 94–118 (ETAVILLLEAGALAARAAVVQQLDN) are Extracellular-facing. Residues 119-140 (VIDVITCSSMLSSLCFLGAIAV) traverse the membrane as a helical segment. Residues 141–163 (DRYISIFYALRYHSIVTLPRARR) lie on the Cytoplasmic side of the membrane. Residues 164–183 (AVAAIWVASVLFSMLFIAYY) traverse the membrane as a helical segment. The Extracellular portion of the chain corresponds to 184–191 (DHAAVLLC). The helical transmembrane segment at 192–211 (LVVFFLAMLVLMAVLYVHML) threads the bilayer. At 212-240 (ARACQHAQGIARLHKRQRPAHQSFGLKGA) the chain is on the cytoplasmic side. The helical transmembrane segment at 241–266 (ATLTILLGIFFLCWGPFFLHLTLIVL) threads the bilayer. Topologically, residues 267-279 (CPQHPTCSCIFKN) are extracellular. Residues 280–300 (FNLFLTLIICNAIIDPLIYAF) traverse the membrane as a helical segment. The Cytoplasmic portion of the chain corresponds to 301–317 (RSQELRRTLKEVLLCSW). Cys315 carries the S-palmitoyl cysteine lipid modification.

Belongs to the G-protein coupled receptor 1 family. In terms of assembly, interacts with MGRN1, but does not undergo MGRN1-mediated ubiquitination; this interaction competes with GNAS-binding and thus inhibits agonist-induced cAMP production. Interacts with OPN3; the interaction results in a decrease in MC1R-mediated cAMP signaling and ultimately a decrease in melanin production in melanocytes.

The protein localises to the cell membrane. Receptor for MSH (alpha, beta and gamma) and ACTH. The activity of this receptor is mediated by G proteins which activate adenylate cyclase. Mediates melanogenesis, the production of eumelanin (black/brown) and phaeomelanin (red/yellow), via regulation of cAMP signaling in melanocytes. The chain is Melanocyte-stimulating hormone receptor (MC1R) from Erythrocebus patas (Red guenon).